Here is a 713-residue protein sequence, read N- to C-terminus: Phosphoribosylformylglycinamidine synthase subunit PurL (713 aa).

The active site involves histidine 32. Tyrosine 35 serves as a coordination point for ATP. Glutamate 76 provides a ligand contact to Mg(2+). Substrate is bound by residues 77 to 80 (SHNH) and arginine 99. Residue histidine 78 is the Proton acceptor of the active site. Aspartate 100 is a binding site for Mg(2+). Position 224 (glutamine 224) interacts with substrate. Mg(2+) is bound at residue aspartate 252. 296–298 (ESQ) is a binding site for substrate. ATP contacts are provided by aspartate 471 and glycine 508. Asparagine 509 provides a ligand contact to Mg(2+). A substrate-binding site is contributed by serine 511.

Belongs to the FGAMS family. In terms of assembly, monomer. Part of the FGAM synthase complex composed of 1 PurL, 1 PurQ and 2 PurS subunits.

It is found in the cytoplasm. The enzyme catalyses N(2)-formyl-N(1)-(5-phospho-beta-D-ribosyl)glycinamide + L-glutamine + ATP + H2O = 2-formamido-N(1)-(5-O-phospho-beta-D-ribosyl)acetamidine + L-glutamate + ADP + phosphate + H(+). The protein operates within purine metabolism; IMP biosynthesis via de novo pathway; 5-amino-1-(5-phospho-D-ribosyl)imidazole from N(2)-formyl-N(1)-(5-phospho-D-ribosyl)glycinamide: step 1/2. Part of the phosphoribosylformylglycinamidine synthase complex involved in the purines biosynthetic pathway. Catalyzes the ATP-dependent conversion of formylglycinamide ribonucleotide (FGAR) and glutamine to yield formylglycinamidine ribonucleotide (FGAM) and glutamate. The FGAM synthase complex is composed of three subunits. PurQ produces an ammonia molecule by converting glutamine to glutamate. PurL transfers the ammonia molecule to FGAR to form FGAM in an ATP-dependent manner. PurS interacts with PurQ and PurL and is thought to assist in the transfer of the ammonia molecule from PurQ to PurL. The protein is Phosphoribosylformylglycinamidine synthase subunit PurL of Thermococcus kodakarensis (strain ATCC BAA-918 / JCM 12380 / KOD1) (Pyrococcus kodakaraensis (strain KOD1)).